The following is an 814-amino-acid chain: Flagellar radial spoke protein 1 (814 aa).

An Asymmetric dimethylarginine modification is found at Arg-243. The interval 283–346 (VQSISTGNRE…PPPPAPKVDP (64 aa)) is disordered. The segment covering 303–329 (PEEDEEEEKEEEKEEPEEGEEGEEGEG) has biased composition (acidic residues). An Asymmetric dimethylarginine modification is found at Arg-428. MORN repeat units lie at residues 577–597 (YFGS…FATG), 600–622 (YAGE…DGGT), 623–645 (YVGE…DGSV), 646–662 (YTGS…GVYW), 671–685 (GEWK…GTYE), and 691–707 (FEGE…ATYT). Residues 739-769 (GIPPGSGDEPQLDEEGQPIEDTDKPPLPAHP) are disordered. A compositionally biased stretch (acidic residues) spans 748 to 758 (PQLDEEGQPIE).

Post-translationally, asymmetrically dimethylated at Arg-243 and Arg-428 during flagellum resorption. Probably methylated by PRMT1.

The protein localises to the cytoplasm. It is found in the cytoskeleton. It localises to the flagellum axoneme. Flagellar radial spokes contribute to the regulation of dynein arm activity and thus the pattern of flagellar bending. They consist of a thin stalk, which is attached to the a subfiber of the outer doublet microtubule, and a bulbous head, which is attached to the stalk and appears to interact with the projections from the central pair of microtubules. The chain is Flagellar radial spoke protein 1 from Chlamydomonas reinhardtii (Chlamydomonas smithii).